Consider the following 33-residue polypeptide: Suppressor protein HFN40 (33 aa).

Suppresses expansion of husk leaf blades. This chain is Suppressor protein HFN40, found in Zea mays (Maize).